The sequence spans 147 residues: Phage-like element PBSX protein XkdM (147 aa).

To B.subtilis YqbM.

The sequence is that of Phage-like element PBSX protein XkdM (xkdM) from Bacillus subtilis (strain 168).